Consider the following 100-residue polypeptide: Large ribosomal subunit protein uL23 (100 aa).

Belongs to the universal ribosomal protein uL23 family. In terms of assembly, part of the 50S ribosomal subunit. Contacts protein L29, and trigger factor when it is bound to the ribosome.

One of the early assembly proteins it binds 23S rRNA. One of the proteins that surrounds the polypeptide exit tunnel on the outside of the ribosome. Forms the main docking site for trigger factor binding to the ribosome. In Idiomarina loihiensis (strain ATCC BAA-735 / DSM 15497 / L2-TR), this protein is Large ribosomal subunit protein uL23.